We begin with the raw amino-acid sequence, 855 residues long: MNESFDKDFSNHTPMMQQYLKLKAQHPEILLFYRMGDFYELFYDDAKRASQLLDISLTKRGASAGEPIPMAGIPHHAVENYLAKLVNQGESVAICEQIGDPATSKGPVERKVVRIVTPGTISDEALLQERQDNLLAAIWQDGKGYGYATLDISSGRFRLSEPADRETMAAELQRTNPAELLYAEDFAEMALIEGRRGLRRRPLWEFEIDTARQQLNLQFGTRDLVGFGVENASRGLCAAGCLLQYVKDTQRTSLPHIRSITMERQQDSIIMDAATRRNLEITQNLAGGVENTLAAVLDCTVTPMGSRMLKRWLHMPVRNTDILRERQQTIGALQDTVSELQPVLRQVGDLERILARLALRTARPRDLARMRHAFQQLPELHAQLETVDSAPVQALRKKMGDFAELRDLLERAIIDAPPVLVRDGGVIAPGYHEELDEWRALADGATDYLDRLEIRERERTGLDTLKVGYNAVHGYYIQISRGQSHLAPINYVRRQTLKNAERYIIPELKEYEDKVLTSKGKALALEKQLYDELFDLLLPHLADLQQSANALAELDVLVNLSERAWTLNYTCPTFTDKPGIRITEGRHPVVEQVLNEPFIANPLNLSPQRRMLIITGPNMGGKSTYMRQTALIALLAYIGSYVPAQNVEIGPIDRIFTRVGAADDLASGRSTFMVEMTETANILHNATENSLVLMDEIGRGTSTYDGLSLAWACAENLANKIKALTLFATHYFELTQLPEKMEGVANVHLDALEHGDTIAFMHSVQDGAASKSYGLAVAALAGVPKEVIKRARQKLRELESISPNAAATQVDGTQMSLLAAPEETSPAVEALENLDPDSLTPRQALEWIYRLKSLV.

616–623 (GPNMGGKS) lines the ATP pocket.

This sequence belongs to the DNA mismatch repair MutS family.

In terms of biological role, this protein is involved in the repair of mismatches in DNA. It is possible that it carries out the mismatch recognition step. This protein has a weak ATPase activity. The polypeptide is DNA mismatch repair protein MutS (Salmonella schwarzengrund (strain CVM19633)).